The sequence spans 760 residues: Catalase-peroxidase (760 aa).

The segment at 1–24 is disordered; it reads MAESKCPFKSQGSRSNVAGGGTRN. The tryptophyl-tyrosyl-methioninium (Trp-Tyr) (with M-268) cross-link spans 96 to 242; sequence WHSAGTYRVF…LAAAHMGLIY (147 aa). Residue H97 is the Proton acceptor of the active site. Residues 242-268 constitute a cross-link (tryptophyl-tyrosyl-methioninium (Tyr-Met) (with W-96)); it reads YVNPEGPDGNPDPVAAAHDIRVTFGRM. H283 contributes to the heme b binding site.

This sequence belongs to the peroxidase family. Peroxidase/catalase subfamily. As to quaternary structure, homodimer or homotetramer. Heme b serves as cofactor. Post-translationally, formation of the three residue Trp-Tyr-Met cross-link is important for the catalase, but not the peroxidase activity of the enzyme.

Its subcellular location is the cytoplasm. It carries out the reaction H2O2 + AH2 = A + 2 H2O. It catalyses the reaction 2 H2O2 = O2 + 2 H2O. Bifunctional enzyme with both catalase and broad-spectrum peroxidase activity. This is Catalase-peroxidase from Aspergillus clavatus (strain ATCC 1007 / CBS 513.65 / DSM 816 / NCTC 3887 / NRRL 1 / QM 1276 / 107).